Here is a 242-residue protein sequence, read N- to C-terminus: Protein ABHD14A (242 aa).

Residues 6–26 (AALLGLGLLLMFLLYMGLPGP) traverse the membrane as a helical; Signal-anchor for type II membrane protein segment. Asparagine 38 carries an N-linked (GlcNAc...) asparagine glycan. Catalysis depends on charge relay system residues serine 142, aspartate 193, and histidine 220.

Belongs to the AB hydrolase superfamily. ABHD14 family.

The protein localises to the cytoplasm. It is found in the membrane. Its function is as follows. Possible role in granule neuron development. The protein is Protein ABHD14A of Rattus norvegicus (Rat).